Consider the following 198-residue polypeptide: Recombination protein RecR (198 aa).

The C4-type zinc finger occupies 57–72 (CSECQTLTDKDPCAVC). A Toprim domain is found at 80 to 175 (RIICVVEGVP…KVTRIAQGIP (96 aa)).

The protein belongs to the RecR family.

In terms of biological role, may play a role in DNA repair. It seems to be involved in an RecBC-independent recombinational process of DNA repair. It may act with RecF and RecO. The protein is Recombination protein RecR of Anaeromyxobacter sp. (strain Fw109-5).